The following is a 357-amino-acid chain: DNA replication and repair protein RecF (357 aa).

30–37 (GANGSGKT) contributes to the ATP binding site.

The protein belongs to the RecF family.

Its subcellular location is the cytoplasm. In terms of biological role, the RecF protein is involved in DNA metabolism; it is required for DNA replication and normal SOS inducibility. RecF binds preferentially to single-stranded, linear DNA. It also seems to bind ATP. In Salmonella arizonae (strain ATCC BAA-731 / CDC346-86 / RSK2980), this protein is DNA replication and repair protein RecF.